We begin with the raw amino-acid sequence, 310 residues long: Protoheme IX farnesyltransferase (310 aa).

9 helical membrane-spanning segments follow: residues 21–43, 48–70, 95–115, 118–138, 147–167, 174–194, 220–240, 243–263, and 289–309; these read LLKP…VAPV, MIAL…LNMW, GEAL…LGLA, LFAA…YSMW, IVIG…VATG, LFMF…LALF, VLVY…TGIG, LYLA…VRIW, and LFLH…GLGG.

This sequence belongs to the UbiA prenyltransferase family. Protoheme IX farnesyltransferase subfamily. In terms of assembly, interacts with CtaA.

It localises to the cell inner membrane. It carries out the reaction heme b + (2E,6E)-farnesyl diphosphate + H2O = Fe(II)-heme o + diphosphate. Its pathway is porphyrin-containing compound metabolism; heme O biosynthesis; heme O from protoheme: step 1/1. Converts heme B (protoheme IX) to heme O by substitution of the vinyl group on carbon 2 of heme B porphyrin ring with a hydroxyethyl farnesyl side group. The sequence is that of Protoheme IX farnesyltransferase from Cereibacter sphaeroides (strain KD131 / KCTC 12085) (Rhodobacter sphaeroides).